The chain runs to 376 residues: Actin (376 aa).

It belongs to the actin family.

The protein localises to the cytoplasm. It is found in the cytoskeleton. The catalysed reaction is ATP + H2O = ADP + phosphate + H(+). Its function is as follows. Actins are highly conserved proteins that are involved in various types of cell motility and are ubiquitously expressed in all eukaryotic cells. The chain is Actin from Trypanosoma cruzi.